A 195-amino-acid polypeptide reads, in one-letter code: dITP/XTP pyrophosphatase (195 aa).

Residue 9-14 (TNNQGK) participates in substrate binding. The Mg(2+) site is built by Glu39 and Asp68. Catalysis depends on Asp68, which acts as the Proton acceptor. Residues Ser69, 146 to 149 (FGYD), Lys169, and 174 to 175 (HR) each bind substrate.

This sequence belongs to the HAM1 NTPase family. Homodimer. Mg(2+) is required as a cofactor.

It carries out the reaction XTP + H2O = XMP + diphosphate + H(+). It catalyses the reaction dITP + H2O = dIMP + diphosphate + H(+). The enzyme catalyses ITP + H2O = IMP + diphosphate + H(+). Pyrophosphatase that catalyzes the hydrolysis of nucleoside triphosphates to their monophosphate derivatives, with a high preference for the non-canonical purine nucleotides XTP (xanthosine triphosphate), dITP (deoxyinosine triphosphate) and ITP. Seems to function as a house-cleaning enzyme that removes non-canonical purine nucleotides from the nucleotide pool, thus preventing their incorporation into DNA/RNA and avoiding chromosomal lesions. The chain is dITP/XTP pyrophosphatase from Gloeobacter violaceus (strain ATCC 29082 / PCC 7421).